The sequence spans 2197 residues: Protein sickie (2197 aa).

Positions 21-129 (RDYAEIYTDW…LFFALSRFKQ (109 aa)) constitute a Calponin-homology (CH) domain. Disordered stretches follow at residues 165 to 197 (GLRT…QLAQ), 235 to 311 (CPPD…PQKH), 331 to 646 (AASV…NKFH), 730 to 767 (GSSP…SPGK), 788 to 910 (RNSR…FGYV), 1094 to 1119 (GPGQ…NRSN), and 1202 to 1223 (TAAG…GLVG). The span at 175–197 (QDKNQQEQQQQQQQQQTPQQLAQ) shows a compositional bias: low complexity. Over residues 261–290 (SDFNTSRPNSPPTSNHTIQSLKSGNNNSLR) the composition is skewed to polar residues. Residues 291–304 (PPSIKSGIPSPSSP) show a composition bias toward low complexity. Polar residues predominate over residues 331 to 341 (AASVASKTQIQ). 2 stretches are compositionally biased toward low complexity: residues 342–354 (SKRT…FSSA) and 379–398 (SVSS…LAAQ). Residues 399 to 428 (QKKEQANKATKLDKKEKSPARSLNKEESGN) show a composition bias toward basic and acidic residues. Composition is skewed to polar residues over residues 429–441 (ESRS…TGKS), 561–570 (ANSQPTSHIS), 577–588 (EPSTPQHSSGIY), and 633–644 (SAPNTPTASPNK). 3 stretches are compositionally biased toward low complexity: residues 755–766 (GPSSSAGGISPG), 796–831 (SIGT…NNNN), and 887–904 (SSSK…KGVP). Residues 1100–1119 (GQMSGNESPYVQSPRMNRSN) show a composition bias toward polar residues. Residues 1262 to 1342 (YGNAEERQAH…RQTIELLRKQ (81 aa)) are a coiled coil. 2 disordered regions span residues 1373-1415 (QALG…SMCS) and 1455-1511 (KTSR…SPAK). Composition is skewed to polar residues over residues 1379–1399 (GSDQ…NNGS) and 1406–1415 (RQHSTDSMCS). Positions 1455 to 1468 (KTSRHVGHHHHHNH) are enriched in basic residues. Positions 1556–1591 (SSASQLESLKEMMNKMRAEMMSLKHNNERLQKLVTT) form a coiled coil. Disordered regions lie at residues 1600–1633 (SLGQ…PPME), 1648–1690 (CLPP…EAAP), and 2172–2197 (SEAQ…AGAE). The segment covering 1603-1616 (QAISPNGSVAGSSE) has biased composition (polar residues). The segment covering 1650–1663 (PPAPAPEQPPPPAP) has biased composition (pro residues). The span at 2184 to 2197 (LDSNVTPESSAGAE) shows a compositional bias: polar residues.

The protein belongs to the Nav/unc-53 family.

Functionally, required for the immune deficiency pathway, which mediates responses to Gram-negative bacterial infection. Favors Rel activation and nuclear translocation. This is Protein sickie (sick) from Drosophila melanogaster (Fruit fly).